The chain runs to 664 residues: E3 ubiquitin-protein ligase CHFR (664 aa).

One can recognise an FHA domain in the interval 38 to 89 (WTIGRRRGCDLSFPSNKLVSGDHCKLTVDEISGEVTLEDTSTNGTVINKLQV). Disordered stretches follow at residues 170 to 220 (LEEP…GRSS) and 245 to 264 (ESKD…GDGE). Residues 174 to 202 (QPSTSTSDLLPTASTSSTEPELTSAGQKH) show a composition bias toward polar residues. Low complexity predominate over residues 203 to 215 (SSSSGPGNTSISP). Over residues 245 to 263 (ESKDHEELEPAKKKMKGDG) the composition is skewed to basic and acidic residues. Residues 303–342 (CIICQDLLHDCVSLQPCMHTFCAACYSGWMERSSLCPTCR) form an RING-type zinc finger. At threonine 385 the chain carries Phosphothreonine. The interval 389-413 (LQPKVRRSFSDEEGSSEDLLELSDV) is disordered. Residues 399–413 (DEEGSSEDLLELSDV) show a composition bias toward acidic residues. Residues 633–655 (PDCYWGRNCRTQVKAHHAMKFNH) form a PBZ-type zinc finger.

This sequence belongs to the CHFR family. As to quaternary structure, interacts with HDAC1 and HDAC2. Interacts with PML (with sumoylated form of PML). In terms of processing, poly-ADP-ribosylated. In addition to binding non covalently poly(ADP-ribose) via its PBZ-type zinc finger, the protein is also covalently poly-ADP-ribosylated by PARP1. Autoubiquitinated; may regulate its cellular level. Post-translationally, phosphorylated by PKB. Phosphorylation may affect its E3 ligase activity.

It localises to the nucleus. Its subcellular location is the PML body. The catalysed reaction is S-ubiquitinyl-[E2 ubiquitin-conjugating enzyme]-L-cysteine + [acceptor protein]-L-lysine = [E2 ubiquitin-conjugating enzyme]-L-cysteine + N(6)-ubiquitinyl-[acceptor protein]-L-lysine.. It functions in the pathway protein modification; protein ubiquitination. Functionally, E3 ubiquitin-protein ligase that functions in the antephase checkpoint by actively delaying passage into mitosis in response to microtubule poisons. Acts in early prophase before chromosome condensation, when the centrosome move apart from each other along the periphery of the nucleus. Probably involved in signaling the presence of mitotic stress caused by microtubule poisons by mediating the 'Lys-48'-linked ubiquitination of target proteins, leading to their degradation by the proteasome. Promotes the ubiquitination and subsequent degradation of AURKA and PLK1. Probably acts as a tumor suppressor, possibly by mediating the polyubiquitination of HDAC1, leading to its degradation. May also promote the formation of 'Lys-63'-linked polyubiquitin chains and functions with the specific ubiquitin-conjugating UBC13-MMS2 (UBE2N-UBE2V2) heterodimer. Substrates that are polyubiquitinated at 'Lys-63' are usually not targeted for degradation, but are rather involved in signaling cellular stress. This is E3 ubiquitin-protein ligase CHFR (Chfr) from Mus musculus (Mouse).